Consider the following 270-residue polypeptide: 4-hydroxy-tetrahydrodipicolinate reductase (270 aa).

NAD(+) contacts are provided by residues Gly-8–Met-13, Asp-34, Gly-102–Thr-104, and Ser-128–Tyr-131. The Proton donor/acceptor role is filled by His-160. His-161 contacts (S)-2,3,4,5-tetrahydrodipicolinate. Lys-164 serves as the catalytic Proton donor. Gly-170 to Thr-171 lines the (S)-2,3,4,5-tetrahydrodipicolinate pocket.

Belongs to the DapB family.

It localises to the cytoplasm. It carries out the reaction (S)-2,3,4,5-tetrahydrodipicolinate + NAD(+) + H2O = (2S,4S)-4-hydroxy-2,3,4,5-tetrahydrodipicolinate + NADH + H(+). The catalysed reaction is (S)-2,3,4,5-tetrahydrodipicolinate + NADP(+) + H2O = (2S,4S)-4-hydroxy-2,3,4,5-tetrahydrodipicolinate + NADPH + H(+). The protein operates within amino-acid biosynthesis; L-lysine biosynthesis via DAP pathway; (S)-tetrahydrodipicolinate from L-aspartate: step 4/4. Catalyzes the conversion of 4-hydroxy-tetrahydrodipicolinate (HTPA) to tetrahydrodipicolinate. The protein is 4-hydroxy-tetrahydrodipicolinate reductase of Methanococcus maripaludis (strain C6 / ATCC BAA-1332).